We begin with the raw amino-acid sequence, 413 residues long: Phosphopentomutase (413 aa).

Aspartate 11, aspartate 306, histidine 311, aspartate 347, histidine 348, and histidine 359 together coordinate Mn(2+).

Belongs to the phosphopentomutase family. Requires Mn(2+) as cofactor.

It is found in the cytoplasm. It catalyses the reaction 2-deoxy-alpha-D-ribose 1-phosphate = 2-deoxy-D-ribose 5-phosphate. It carries out the reaction alpha-D-ribose 1-phosphate = D-ribose 5-phosphate. It functions in the pathway carbohydrate degradation; 2-deoxy-D-ribose 1-phosphate degradation; D-glyceraldehyde 3-phosphate and acetaldehyde from 2-deoxy-alpha-D-ribose 1-phosphate: step 1/2. Its function is as follows. Isomerase that catalyzes the conversion of deoxy-ribose 1-phosphate (dRib-1-P) and ribose 1-phosphate (Rib-1-P) to deoxy-ribose 5-phosphate (dRib-5-P) and ribose 5-phosphate (Rib-5-P), respectively. This chain is Phosphopentomutase, found in Helicobacter pylori (strain G27).